The sequence spans 344 residues: Serpentine receptor class H-72 (344 aa).

Helical transmembrane passes span 30–50 (GLAF…FFTG), 66–86 (LSLV…SFFI), 110–132 (TVVQ…TLLF), 155–175 (WLAG…FNLA), 221–241 (SIYM…LVIV), 259–279 (YGLI…SVLI), and 292–312 (LVSI…LLVH).

This sequence belongs to the nematode receptor-like protein srh family.

The protein resides in the membrane. In Caenorhabditis elegans, this protein is Serpentine receptor class H-72 (srh-72).